The chain runs to 220 residues: MGFLFGTRPTPTSIVNREDALPGRDEPILPHPAPHTVLGTPIDGPWKDGQRSVVVGLGCFWGAEKLFWQIDGVESTAVGYAGGYTPNPTYREVCTGRTGHAETVRVIYDPQEVSFEDLIRTFFEAHDPTQGFRQGNDVGTQYRSVIYAQTDDEVQKAREIAESFSHSLADAGYGGITTDISLLSDTPTKTMYLAEDEHQQYLDKNPNGYCPVHSTGVACR.

The active site involves Cys59.

The protein belongs to the MsrA Met sulfoxide reductase family.

The catalysed reaction is L-methionyl-[protein] + [thioredoxin]-disulfide + H2O = L-methionyl-(S)-S-oxide-[protein] + [thioredoxin]-dithiol. It catalyses the reaction [thioredoxin]-disulfide + L-methionine + H2O = L-methionine (S)-S-oxide + [thioredoxin]-dithiol. Its function is as follows. Has an important function as a repair enzyme for proteins that have been inactivated by oxidation. Catalyzes the reversible oxidation-reduction of methionine sulfoxide in proteins to methionine. This Corynebacterium kroppenstedtii (strain DSM 44385 / JCM 11950 / CIP 105744 / CCUG 35717) protein is Peptide methionine sulfoxide reductase MsrA.